Consider the following 47-residue polypeptide: Putative heat shock protein HSP90 (47 aa).

An ATP-binding site is contributed by Arg47.

This sequence belongs to the heat shock protein 90 family. In terms of assembly, homodimer.

The protein localises to the cytoplasm. Functionally, putative molecular chaperone that may promote the maturation, structural maintenance and proper regulation of specific target proteins. In Populus euphratica (Euphrates poplar), this protein is Putative heat shock protein HSP90.